We begin with the raw amino-acid sequence, 306 residues long: Tryptophan 2,3-dioxygenase (306 aa).

Substrate-binding positions include 75 to 79, Tyr137, and Arg141; that span reads FIIQH. His264 is a binding site for heme. Residue Thr278 coordinates substrate.

It belongs to the tryptophan 2,3-dioxygenase family. As to quaternary structure, homotetramer. Requires heme as cofactor.

The enzyme catalyses L-tryptophan + O2 = N-formyl-L-kynurenine. The protein operates within amino-acid degradation; L-tryptophan degradation via kynurenine pathway; L-kynurenine from L-tryptophan: step 1/2. Its function is as follows. Heme-dependent dioxygenase that catalyzes the oxidative cleavage of the L-tryptophan (L-Trp) pyrrole ring and converts L-tryptophan to N-formyl-L-kynurenine. Catalyzes the oxidative cleavage of the indole moiety. The protein is Tryptophan 2,3-dioxygenase of Paraburkholderia phytofirmans (strain DSM 17436 / LMG 22146 / PsJN) (Burkholderia phytofirmans).